A 147-amino-acid chain; its full sequence is Orcokinin peptides (147 aa).

An N-terminal signal peptide occupies residues 1 to 27; it reads MPRHSVFALSILALSITATVWIPTVQA. Propeptides lie at residues 28–89 and 146–147; these read ETNL…ERFG and FG.

It belongs to the orcokinin family.

It is found in the secreted. In terms of biological role, myotropic peptides. The polypeptide is Orcokinin peptides (Apis mellifera (Honeybee)).